Consider the following 417-residue polypeptide: C6 finger transcription factor traC (417 aa).

The interval 1-40 (MNFSEQFTGRSEPGRKANRTSNNNTNSTTNVATVTTDDSN) is disordered. Positions 19–37 (RTSNNNTNSTTNVATVTTD) are enriched in low complexity. A DNA-binding region (zn(2)-C6 fungal-type) is located at residues 44-73 (CDRCKGQKLRCIWENGSNTCRRCTRARAVC). Disordered regions lie at residues 75–94 (QPRP…KHHV) and 104–128 (WVSS…DDHD). Positions 80 to 94 (PFGRPRCSTKSKHHV) are enriched in basic residues. The span at 104–114 (WVSSTTQQPQE) shows a compositional bias: polar residues.

It localises to the nucleus. In terms of biological role, C6 finger transcription factor; part of the tra gene cluster that produces terrestric acid. The clavatol biosynthesis cluster cla and the terrestric acid cluster tra are both involved in the production of peniphenones and penilactones. In Penicillium crustosum (Blue mold fungus), this protein is C6 finger transcription factor traC.